Consider the following 119-residue polypeptide: Large ribosomal subunit protein uL18 (119 aa).

The protein belongs to the universal ribosomal protein uL18 family. Part of the 50S ribosomal subunit; part of the 5S rRNA/L5/L18/L25 subcomplex. Contacts the 5S and 23S rRNAs.

Its function is as follows. This is one of the proteins that bind and probably mediate the attachment of the 5S RNA into the large ribosomal subunit, where it forms part of the central protuberance. This is Large ribosomal subunit protein uL18 from Clostridium botulinum (strain Loch Maree / Type A3).